Reading from the N-terminus, the 623-residue chain is Glutathione import ATP-binding protein GsiA (623 aa).

ABC transporter domains follow at residues 15 to 269 and 314 to 564; these read VENL…RALL and LRVR…RKLL. ATP contacts are provided by residues 49-56 and 357-364; these read GESGSGKS.

This sequence belongs to the ABC transporter superfamily. Glutathione importer (TC 3.A.1.5.11) family. As to quaternary structure, the complex is composed of two ATP-binding proteins (GsiA), two transmembrane proteins (GsiC and GsiD) and a solute-binding protein (GsiB).

It localises to the cell inner membrane. It carries out the reaction glutathione(out) + ATP + H2O = glutathione(in) + ADP + phosphate + H(+). Functionally, part of the ABC transporter complex GsiABCD involved in glutathione import. Responsible for energy coupling to the transport system. The protein is Glutathione import ATP-binding protein GsiA of Escherichia coli O157:H7.